Here is an 81-residue protein sequence, read N- to C-terminus: Cytochrome c oxidase subunit NDUFA4 (81 aa).

Topologically, residues 1-14 (MLRQIIGQAKKHPS) are mitochondrial matrix. K10 carries the N6-acetyllysine modification. Residues 15 to 37 (LIPLFVFIGTGATGATLYLLRLA) traverse the membrane as a helical segment. Residues 38-81 (LFNPDVCWDRNNPEPWNKLGPNDQYKFYSVNVDYSKLKKERPDF) are Mitochondrial intermembrane-facing. The residue at position 66 (S66) is a Phosphoserine.

This sequence belongs to the complex IV NDUFA4 subunit family. In terms of assembly, component of the cytochrome c oxidase (complex IV, CIV), a multisubunit enzyme composed of 14 subunits. The complex is composed of a catalytic core of 3 subunits MT-CO1, MT-CO2 and MT-CO3, encoded in the mitochondrial DNA, and 11 supernumerary subunits COX4I1 (or COX4I2), COX5A, COX5B, COX6A1 (or COX6A2), COX6B1 (or COX6B2), COX6C, COX7A2 (or COX7A1), COX7B, COX7C, COX8A and NDUFA4, which are encoded in the nuclear genome. The complex exists as a monomer or a dimer and forms supercomplexes (SCs) in the inner mitochondrial membrane with NADH-ubiquinone oxidoreductase (complex I, CI) and ubiquinol-cytochrome c oxidoreductase (cytochrome b-c1 complex, complex III, CIII), resulting in different assemblies (supercomplex SCI(1)III(2)IV(1) and megacomplex MCI(2)III(2)IV(2)). Interacts with RAB5IF. Interacts with FLVCR2; this interaction occurs in the absence of heme and is disrupted upon heme binding.

The protein resides in the mitochondrion inner membrane. In terms of biological role, component of the cytochrome c oxidase, the last enzyme in the mitochondrial electron transport chain which drives oxidative phosphorylation. The respiratory chain contains 3 multisubunit complexes succinate dehydrogenase (complex II, CII), ubiquinol-cytochrome c oxidoreductase (cytochrome b-c1 complex, complex III, CIII) and cytochrome c oxidase (complex IV, CIV), that cooperate to transfer electrons derived from NADH and succinate to molecular oxygen, creating an electrochemical gradient over the inner membrane that drives transmembrane transport and the ATP synthase. Cytochrome c oxidase is the component of the respiratory chain that catalyzes the reduction of oxygen to water. Electrons originating from reduced cytochrome c in the intermembrane space (IMS) are transferred via the dinuclear copper A center (CU(A)) of subunit 2 and heme A of subunit 1 to the active site in subunit 1, a binuclear center (BNC) formed by heme A3 and copper B (CU(B)). The BNC reduces molecular oxygen to 2 water molecules unsing 4 electrons from cytochrome c in the IMS and 4 protons from the mitochondrial matrix. NDUFA4 is required for complex IV maintenance. This is Cytochrome c oxidase subunit NDUFA4 (NDUFA4) from Homo sapiens (Human).